A 254-amino-acid chain; its full sequence is Alcohol dehydrogenase 2 (254 aa).

Position 10–33 (10–33 (FVAGLGGIGLDTSREIVKSGPKNL)) interacts with NAD(+). Ser138 provides a ligand contact to substrate. Residue Tyr151 is the Proton acceptor of the active site.

The protein belongs to the short-chain dehydrogenases/reductases (SDR) family. In terms of assembly, homodimer.

It carries out the reaction a primary alcohol + NAD(+) = an aldehyde + NADH + H(+). The enzyme catalyses a secondary alcohol + NAD(+) = a ketone + NADH + H(+). This chain is Alcohol dehydrogenase 2 (Adh2), found in Drosophila hydei (Fruit fly).